A 531-amino-acid polypeptide reads, in one-letter code: Putative aldehyde dehydrogenase family 7 member A1 homolog (531 aa).

Residue 264–269 (GSSEIG) coordinates NAD(+). The active-site Proton acceptor is the E286. The active-site Nucleophile is C320.

This sequence belongs to the aldehyde dehydrogenase family. As to quaternary structure, homotetramer.

The catalysed reaction is an aldehyde + NAD(+) + H2O = a carboxylate + NADH + 2 H(+). The polypeptide is Putative aldehyde dehydrogenase family 7 member A1 homolog (alh-9) (Caenorhabditis elegans).